A 64-amino-acid chain; its full sequence is Large ribosomal subunit protein bL35 (64 aa).

The disordered stretch occupies residues 1-25; the sequence is MPKMKTHRGAAKRLKKTGTGKLKRA.

Belongs to the bacterial ribosomal protein bL35 family.

The sequence is that of Large ribosomal subunit protein bL35 from Clostridioides difficile (strain 630) (Peptoclostridium difficile).